A 218-amino-acid polypeptide reads, in one-letter code: Cytochrome b6 (218 aa).

A helical transmembrane segment spans residues 35–55; the sequence is IFYCLGGITLVCFLIQFATGF. Residue Cys38 participates in heme c binding. Residues His89 and His103 each contribute to the heme b site. The next 3 helical transmembrane spans lie at 93–113, 119–139, and 189–209; these read ASMMVLMLILHVFRVYLTGGF, LTWVTGVVMAVITVAFGVTGY, and LHTFVLPWTLAIFMLMHFLMI. His190 and His205 together coordinate heme b.

The protein belongs to the cytochrome b family. PetB subfamily. The 4 large subunits of the cytochrome b6-f complex are cytochrome b6, subunit IV (17 kDa polypeptide, PetD), cytochrome f and the Rieske protein, while the 4 small subunits are PetG, PetL, PetM and PetN. The complex functions as a dimer. The cofactor is heme b. Requires heme c as cofactor.

The protein localises to the cellular thylakoid membrane. In terms of biological role, component of the cytochrome b6-f complex, which mediates electron transfer between photosystem II (PSII) and photosystem I (PSI), cyclic electron flow around PSI, and state transitions. In Prochlorococcus marinus (strain SARG / CCMP1375 / SS120), this protein is Cytochrome b6.